The chain runs to 451 residues: Exodeoxyribonuclease 7 large subunit (451 aa).

The protein belongs to the XseA family. As to quaternary structure, heterooligomer composed of large and small subunits.

The protein localises to the cytoplasm. It carries out the reaction Exonucleolytic cleavage in either 5'- to 3'- or 3'- to 5'-direction to yield nucleoside 5'-phosphates.. In terms of biological role, bidirectionally degrades single-stranded DNA into large acid-insoluble oligonucleotides, which are then degraded further into small acid-soluble oligonucleotides. The polypeptide is Exodeoxyribonuclease 7 large subunit (Thiobacillus denitrificans (strain ATCC 25259 / T1)).